The sequence spans 233 residues: Small ribosomal subunit protein uS3 (233 aa).

Positions 39–107 (VRKYLTKELE…PAQINIAEVR (69 aa)) constitute a KH type-2 domain.

It belongs to the universal ribosomal protein uS3 family. As to quaternary structure, part of the 30S ribosomal subunit. Forms a tight complex with proteins S10 and S14.

Its function is as follows. Binds the lower part of the 30S subunit head. Binds mRNA in the 70S ribosome, positioning it for translation. This Pectobacterium carotovorum subsp. carotovorum (strain PC1) protein is Small ribosomal subunit protein uS3.